A 280-amino-acid chain; its full sequence is uncharacterized protein (280 aa).

Positions 26-127 (YFMSMKLLDV…TRVSILMRYY (102 aa)) constitute a KilA-N domain.

This is an uncharacterized protein from Vertebrata (FPV).